The chain runs to 855 residues: DNA mismatch repair protein MutS (855 aa).

621–628 (GPNMGGKS) contributes to the ATP binding site.

The protein belongs to the DNA mismatch repair MutS family.

This protein is involved in the repair of mismatches in DNA. It is possible that it carries out the mismatch recognition step. This protein has a weak ATPase activity. This chain is DNA mismatch repair protein MutS, found in Francisella tularensis subsp. holarctica (strain OSU18).